The chain runs to 334 residues: 6-phosphogluconolactonase (334 aa).

This sequence belongs to the cycloisomerase 2 family.

The enzyme catalyses 6-phospho-D-glucono-1,5-lactone + H2O = 6-phospho-D-gluconate + H(+). The protein operates within carbohydrate degradation; pentose phosphate pathway; D-ribulose 5-phosphate from D-glucose 6-phosphate (oxidative stage): step 2/3. In terms of biological role, catalyzes the hydrolysis of 6-phosphogluconolactone to 6-phosphogluconate. In Buchnera aphidicola subsp. Acyrthosiphon pisum (strain Tuc7), this protein is 6-phosphogluconolactonase.